The chain runs to 575 residues: MSNGQLIYLMVAIAVILVLAYVVAIFLRKRNEGRLEALEEKKEELYNLPVNDEVEAVKNMHLIGQSQVAFREWNQKWVDLSLNSFADIENNLFEAEGYNHSFRFLKASHQIDQIESQITLIEEDIAAIRNALADLEKQESKNSGRVLHALDLFEELQHRVAENSEQYGQALDEIEKQLENIQSEFSQFVTLNSSGDPVEAAVILDNTENHILALSHIVDRVPALVTTLSTELPDQLQDLEAGYRKLIDANYHFVETDIEARFHLLYEAFKKNQENIRQLELDNAEYENGQAQEEINALYDIFTREIAAQKVVENLLATLPTYLQHMKENNTLLGEDIARLNKTYLLPETAASHVRRIQTELESFEAAIVEVTSNQEEPTQAYSVLEENLEDLQTQLKDIEDEQISVSERLTQIEKDDINARQKANVYVNRLHTIKRYMEKRNLPGIPQTFLKLFFTASNNTEDLMVELEQKMINIESVTRVLEIATNDMEALETETYNIVQYATLTEQLLQYSNRYRSFDERIQEAFNEALDIFEKEFDYHASFDKISQALEVAEPGVTNRFVTSYEKTRETIRF.

Over 1-8 (MSNGQLIY) the chain is Extracellular. A helical transmembrane segment spans residues 9-27 (LMVAIAVILVLAYVVAIFL). Residues 28 to 575 (RKRNEGRLEA…YEKTRETIRF (548 aa)) are Cytoplasmic-facing. 4 coiled-coil regions span residues 105 to 191 (LKAS…FVTL), 265 to 301 (LYEA…LYDI), 354 to 416 (VRRI…IEKD), and 456 to 526 (TASN…IQEA).

It belongs to the EzrA family.

The protein localises to the cell membrane. In terms of biological role, negative regulator of FtsZ ring formation; modulates the frequency and position of FtsZ ring formation. Inhibits FtsZ ring formation at polar sites. Interacts either with FtsZ or with one of its binding partners to promote depolymerization. The chain is Septation ring formation regulator EzrA from Streptococcus pneumoniae serotype 4 (strain ATCC BAA-334 / TIGR4).